The sequence spans 102 residues: MIIFKNIVTLENWFVIYIIRRVYIYMNIALRKGCEKKCNMFLTNVIACIQWVDLSDCFFSNLARSKASLLILLSSFILDFIFLHQCLNLSSLDGDTYFIIRS.

This is an uncharacterized protein from Saccharomyces cerevisiae (strain ATCC 204508 / S288c) (Baker's yeast).